The sequence spans 334 residues: Cytoskeleton protein RodZ (334 aa).

Residues 1 to 111 (MNTEATHDQN…LGKRRKKRDG (111 aa)) are Cytoplasmic-facing. An HTH cro/C1-type domain is found at 19–71 (LRNAREQLGLSQQAVAERLCLKVSTVRDIEEDKAPSDLASTFLRGYIRSYARL). Positions 30 to 49 (QQAVAERLCLKVSTVRDIEE) form a DNA-binding region, H-T-H motif. Residues 112–132 (WLMSFTWLVLFVVVGLTGAWW) form a helical; Signal-anchor for type II membrane protein membrane-spanning segment. The Periplasmic segment spans residues 133 to 334 (WQNHKAQQEE…TLNAEPTPAQ (202 aa)). The interval 155–241 (NADKDSGQSV…PSALPTSQAG (87 aa)) is disordered. Low complexity-rich tracts occupy residues 170-211 (AATS…TVVA) and 219-241 (TAATSAAPAATETPSALPTSQAG).

This sequence belongs to the RodZ family.

Its subcellular location is the cell inner membrane. Functionally, cytoskeletal protein that is involved in cell-shape control through regulation of the length of the long axis. In Salmonella agona (strain SL483), this protein is Cytoskeleton protein RodZ.